Consider the following 292-residue polypeptide: Acetyl-coenzyme A carboxylase carboxyl transferase subunit beta (292 aa).

A CoA carboxyltransferase N-terminal domain is found at 29-292 (LWSKCPECGQ…HGCLQGSAAV (264 aa)). Residues Cys33, Cys36, Cys52, and Cys55 each contribute to the Zn(2+) site. The C4-type zinc finger occupies 33–55 (CPECGQVVYRKDLLANASVCSNC).

It belongs to the AccD/PCCB family. In terms of assembly, acetyl-CoA carboxylase is a heterohexamer composed of biotin carboxyl carrier protein (AccB), biotin carboxylase (AccC) and two subunits each of ACCase subunit alpha (AccA) and ACCase subunit beta (AccD). Zn(2+) is required as a cofactor.

It is found in the cytoplasm. It carries out the reaction N(6)-carboxybiotinyl-L-lysyl-[protein] + acetyl-CoA = N(6)-biotinyl-L-lysyl-[protein] + malonyl-CoA. Its pathway is lipid metabolism; malonyl-CoA biosynthesis; malonyl-CoA from acetyl-CoA: step 1/1. Functionally, component of the acetyl coenzyme A carboxylase (ACC) complex. Biotin carboxylase (BC) catalyzes the carboxylation of biotin on its carrier protein (BCCP) and then the CO(2) group is transferred by the transcarboxylase to acetyl-CoA to form malonyl-CoA. This is Acetyl-coenzyme A carboxylase carboxyl transferase subunit beta from Synechococcus sp. (strain WH7803).